Consider the following 55-residue polypeptide: Large ribosomal subunit protein bL33 (55 aa).

Belongs to the bacterial ribosomal protein bL33 family.

This is Large ribosomal subunit protein bL33 from Methylobacterium sp. (strain 4-46).